Reading from the N-terminus, the 95-residue chain is Enhancer of yellow 2b transcription factor (95 aa).

The protein belongs to the ENY2 family. In terms of tissue distribution, expressed specifically in testis.

Testis-specific paralog of the ubiquitously expressed transcription and mRNA export factor e(y)2. Cannot functionally replace e(y)2. In Drosophila melanogaster (Fruit fly), this protein is Enhancer of yellow 2b transcription factor (e(y)2b).